The chain runs to 215 residues: MGRRPARCYRQPKGKPYPKSRYNRGVPDARIRIYDSGRKKATVEEFPYVVHIVSDEKEQITSEALEAARIAANKNLIKFISKDAFHLRCRVHPWHVLRINKMLSCAGADRLQSGMRGAFGKALGKAARVDIGSILFSVRVKEPHVKYAIDALTRAKAKFPGRQKVVTSQKWGFTKLTRAQYSRLRNQKKLVTDGSNVKVIGERGPLSRLELFRKI.

The disordered stretch occupies residues 1–22 (MGRRPARCYRQPKGKPYPKSRY).

This sequence belongs to the universal ribosomal protein uL16 family.

In Tetrahymena thermophila (strain SB210), this protein is Large ribosomal subunit protein uL16 (RPL10).